A 168-amino-acid polypeptide reads, in one-letter code: Cytochrome c-type biogenesis protein CcmE (168 aa).

Topologically, residues M1–R7 are cytoplasmic. The helical; Signal-anchor for type II membrane protein transmembrane segment at L8–A28 threads the bilayer. Residues M29 to Q168 are Periplasmic-facing. Heme contacts are provided by H122 and Y126. Residues A134–Q168 form a disordered region.

It belongs to the CcmE/CycJ family.

It is found in the cell inner membrane. Functionally, heme chaperone required for the biogenesis of c-type cytochromes. Transiently binds heme delivered by CcmC and transfers the heme to apo-cytochromes in a process facilitated by CcmF and CcmH. The protein is Cytochrome c-type biogenesis protein CcmE of Methylobacterium nodulans (strain LMG 21967 / CNCM I-2342 / ORS 2060).